Consider the following 168-residue polypeptide: MKVASGSAAAAAGPSCSLKAGRTAGEVVLGLSEQSVAISRCAGTRLPALLDEQQVNVLLYDMNGCYSRLKELVPTLPQNRKVSKVEILQHVIDYIRDLQLELNSESEVGTTGGRGLPVRAPLSTLNGEISALAAEVRSESEYYIILQWETEATGGGCPPSLLFRRIAI.

The bHLH domain occupies 46 to 98; sequence LPALLDEQQVNVLLYDMNGCYSRLKELVPTLPQNRKVSKVEILQHVIDYIRDL. Residues 53–106 form an interaction with IFI204 region; it reads QQVNVLLYDMNGCYSRLKELVPTLPQNRKVSKVEILQHVIDYIRDLQLELNSES. The short motif at 91–104 is the Nuclear export signal element; the sequence is VIDYIRDLQLELNS.

As to quaternary structure, heterodimer with other HLH proteins. Interacts with CLOCK and BMAL1. Interacts with COPS5, IFI204, GATA4 and NKX2-5. Post-translationally, polyubiquitinated; which is favored by Ifi204 and leads to proteasomal degradation.

It is found in the cytoplasm. The protein localises to the nucleus. Functionally, transcriptional regulator (lacking a basic DNA binding domain) which negatively regulates the basic helix-loop-helix (bHLH) transcription factors by forming heterodimers and inhibiting their DNA binding and transcriptional activity. Implicated in regulating a variety of cellular processes, including cellular growth, senescence, differentiation, apoptosis, angiogenesis, and neoplastic transformation. Inhibits skeletal muscle and cardiac myocyte differentiation. Regulates the circadian clock by repressing the transcriptional activator activity of the CLOCK-BMAL1 heterodimer. This Mus musculus (Mouse) protein is DNA-binding protein inhibitor ID-1 (Id1).